Here is an 87-residue protein sequence, read N- to C-terminus: Small ribosomal subunit protein bS20 (87 aa).

Basic residues predominate over residues methionine 1–isoleucine 11. Positions methionine 1 to serine 26 are disordered.

Belongs to the bacterial ribosomal protein bS20 family.

Binds directly to 16S ribosomal RNA. This is Small ribosomal subunit protein bS20 from Trichlorobacter lovleyi (strain ATCC BAA-1151 / DSM 17278 / SZ) (Geobacter lovleyi).